Consider the following 335-residue polypeptide: dTDP-glucose 4,6-dehydratase (335 aa).

NAD(+) is bound by residues 11 to 12, 38 to 41, 61 to 62, 81 to 85, and threonine 100; these read FI, DKLT, DI, and FAAET. Threonine 85 provides a ligand contact to substrate. Position 125 (threonine 125) interacts with substrate. Aspartate 126 serves as the catalytic Proton donor. Active-site proton acceptor residues include glutamate 127 and tyrosine 149. Residue 149–153 participates in NAD(+) binding; sequence YSASK. Position 178 (asparagine 178) interacts with substrate. Position 179 (asparagine 179) interacts with NAD(+). Substrate contacts are provided by residues 188–189, 204–206, arginine 213, asparagine 248, and 271–275; these read KI, PLY, and DRKGH.

This sequence belongs to the NAD(P)-dependent epimerase/dehydratase family. dTDP-glucose dehydratase subfamily. Requires NAD(+) as cofactor.

It carries out the reaction dTDP-alpha-D-glucose = dTDP-4-dehydro-6-deoxy-alpha-D-glucose + H2O. The protein operates within antibiotic biosynthesis. Functionally, involved in the biosynthesis of the two 2,6-deoxysugars, dTDP-L-oleandrose and dTDP-D-desosamine, attached to the macrolactone ring oleandolide to produce the aglycone antibiotic oleandomycin. Catalyzes the dehydration of dTDP-D-glucose to form dTDP-6-deoxy-D-xylo-4-hexulose via a three-step process involving oxidation, dehydration and reduction. The chain is dTDP-glucose 4,6-dehydratase from Streptomyces antibioticus.